The chain runs to 646 residues: Altered inheritance of mitochondria protein 9, mitochondrial (646 aa).

The transit peptide at 1–34 directs the protein to the mitochondrion; sequence MLRIPSRIGSRQVLACAGRNLKCGSVMRHISRRN.

Belongs to the AIM9 family.

The protein resides in the mitochondrion. This is Altered inheritance of mitochondria protein 9, mitochondrial (AIM9) from Candida glabrata (strain ATCC 2001 / BCRC 20586 / JCM 3761 / NBRC 0622 / NRRL Y-65 / CBS 138) (Yeast).